The following is a 1037-amino-acid chain: Mediator of RNA polymerase II transcription subunit 14 (1037 aa).

This sequence belongs to the Mediator complex subunit 14 family. In terms of assembly, component of the Mediator complex.

The protein resides in the nucleus. Component of the Mediator complex, a coactivator involved in the regulated transcription of nearly all RNA polymerase II-dependent genes. Mediator functions as a bridge to convey information from gene-specific regulatory proteins to the basal RNA polymerase II transcription machinery. Mediator is recruited to promoters by direct interactions with regulatory proteins and serves as a scaffold for the assembly of a functional preinitiation complex with RNA polymerase II and the general transcription factors. This Candida glabrata (strain ATCC 2001 / BCRC 20586 / JCM 3761 / NBRC 0622 / NRRL Y-65 / CBS 138) (Yeast) protein is Mediator of RNA polymerase II transcription subunit 14 (RGR1).